The primary structure comprises 297 residues: Transcription factor LRL3 (297 aa).

Residues 59-109 (PDQFHHPQESGGPTMGSQEGLQPQGTVSTTSAPVVRQKPRVRARRGQATDP) form a disordered region. Over residues 73 to 90 (MGSQEGLQPQGTVSTTSA) the composition is skewed to polar residues. Residues 105–118 (QATDPHSIAERLRR) form a basic motif; degenerate region. The region spanning 105 to 154 (QATDPHSIAERLRRERIAERMKSLQELVPNTNKTDKASMLDEIIEYVRFL) is the bHLH domain. A helix-loop-helix motif region spans residues 119–154 (ERIAERMKSLQELVPNTNKTDKASMLDEIIEYVRFL).

Homodimer. In terms of tissue distribution, expressed in trichomes of the root maturation zone. Detected constitutively in flowers.

It is found in the nucleus. Its function is as follows. Transcription factor that regulates the development of root hairs. Does not seem to be involved in the regulation of sperm cell development. In Arabidopsis thaliana (Mouse-ear cress), this protein is Transcription factor LRL3.